We begin with the raw amino-acid sequence, 207 residues long: MLELLVASLSLALAFFALLDGWYLVRVPCAVLRARLLQPRVRDLLAEQRYAGRVLPSDLDLLLHMNNARYLREADVARAAHLTRCGVLGALRDLNAHTVLAASCARYRRSLRLFEPFEVHTRLQGWDDRAFYLEARFVSLRDGFVCALLRFRQHVLGTSPDRVVQHLCKRRVEPPELPEDLKHWISYNETSSQLLRAESGLSDRKDQ.

The N-terminal stretch at 1 to 21 (MLELLVASLSLALAFFALLDG) is a signal peptide. Asn-188 is a glycosylation site (N-linked (GlcNAc...) asparagine). Residue Ser-199 is modified to Phosphoserine.

It belongs to the THEM6 family.

The protein localises to the secreted. This is Protein THEM6 (Them6) from Mus musculus (Mouse).